Consider the following 337-residue polypeptide: Casein kinase I isoform alpha (337 aa).

The region spanning 20 to 288 (YRVIRKIGSG…YLRQLFRILF (269 aa)) is the Protein kinase domain. ATP contacts are provided by residues 26–34 (IGSGSFGDI) and Lys-49. Asp-139 functions as the Proton acceptor in the catalytic mechanism.

It belongs to the protein kinase superfamily. CK1 Ser/Thr protein kinase family. Casein kinase I subfamily. As to quaternary structure, interacts with cos. The cofactor is Mg(2+). Post-translationally, phosphorylated. The dephosphorylated kinase is active in the cytoplasm while the active kinase in the nucleus is phosphorylated.

The protein resides in the cytoplasm. Its subcellular location is the nucleus. The catalysed reaction is L-seryl-[protein] + ATP = O-phospho-L-seryl-[protein] + ADP + H(+). The enzyme catalyses L-threonyl-[protein] + ATP = O-phospho-L-threonyl-[protein] + ADP + H(+). Activity increases following DNA damage. Functionally, casein kinases are operationally defined by their preferential utilization of acidic proteins such as caseins as substrates. Can phosphorylate a large number of proteins. Negative regulator of wg signaling. Phosphorylates arm directly or indirectly and stimulates its degradation which prevents inappropriate wg signaling. Phosphorylates smo which promotes its accumulation at the cell surface and its signaling activity in response to hh. Together with dco, regulates proteolytic processing of ci by phosphorylating it, which promotes its binding to slmb, the F-box recognition component of the SCF(slmb) E3 ubiquitin-protein ligase required for ci processing. Inhibits condensin II interphase activity by promoting degradation of the Cap-H2 regulatory subunit and limiting the levels of chromatin-bound Cap-H2 which regulates interphase chromosome organization. In Drosophila melanogaster (Fruit fly), this protein is Casein kinase I isoform alpha (CkIalpha).